The primary structure comprises 145 residues: Ribosomal RNA large subunit methyltransferase H (145 aa).

S-adenosyl-L-methionine-binding positions include Leu64, Gly93, and 112 to 117; that span reads LSPLTF.

The protein belongs to the RNA methyltransferase RlmH family. As to quaternary structure, homodimer.

The protein resides in the cytoplasm. It carries out the reaction pseudouridine(1915) in 23S rRNA + S-adenosyl-L-methionine = N(3)-methylpseudouridine(1915) in 23S rRNA + S-adenosyl-L-homocysteine + H(+). In terms of biological role, specifically methylates the pseudouridine at position 1915 (m3Psi1915) in 23S rRNA. This Prochlorococcus marinus (strain NATL1A) protein is Ribosomal RNA large subunit methyltransferase H.